A 283-amino-acid chain; its full sequence is Pantothenate synthetase (283 aa).

30-37 contributes to the ATP binding site; sequence MGNLHAGH. His-37 functions as the Proton donor in the catalytic mechanism. Gln-61 contacts (R)-pantoate. Beta-alanine is bound at residue Gln-61. Residue 149–152 participates in ATP binding; that stretch reads GQKD. (R)-pantoate is bound at residue Gln-155. ATP contacts are provided by residues Val-178 and 186–189; that span reads LSSR.

The protein belongs to the pantothenate synthetase family. Homodimer.

It is found in the cytoplasm. It catalyses the reaction (R)-pantoate + beta-alanine + ATP = (R)-pantothenate + AMP + diphosphate + H(+). The protein operates within cofactor biosynthesis; (R)-pantothenate biosynthesis; (R)-pantothenate from (R)-pantoate and beta-alanine: step 1/1. Its function is as follows. Catalyzes the condensation of pantoate with beta-alanine in an ATP-dependent reaction via a pantoyl-adenylate intermediate. This is Pantothenate synthetase from Hydrogenovibrio crunogenus (strain DSM 25203 / XCL-2) (Thiomicrospira crunogena).